Here is a 472-residue protein sequence, read N- to C-terminus: UDP-N-acetylmuramate--L-alanine ligase (472 aa).

ATP is bound at residue 122–128 (GTHGKTT).

The protein belongs to the MurCDEF family.

The protein localises to the cytoplasm. It catalyses the reaction UDP-N-acetyl-alpha-D-muramate + L-alanine + ATP = UDP-N-acetyl-alpha-D-muramoyl-L-alanine + ADP + phosphate + H(+). The protein operates within cell wall biogenesis; peptidoglycan biosynthesis. Functionally, cell wall formation. The chain is UDP-N-acetylmuramate--L-alanine ligase from Thermobifida fusca (strain YX).